The chain runs to 131 residues: Peptide methionine sulfoxide reductase MsrB (131 aa).

In terms of domain architecture, MsrB spans 8–130 (LEEWRAMLDP…NSVCLDLKPR (123 aa)). The Zn(2+) site is built by cysteine 47, cysteine 50, cysteine 96, and cysteine 99. Cysteine 119 acts as the Nucleophile in catalysis.

This sequence belongs to the MsrB Met sulfoxide reductase family. Zn(2+) serves as cofactor.

The enzyme catalyses L-methionyl-[protein] + [thioredoxin]-disulfide + H2O = L-methionyl-(R)-S-oxide-[protein] + [thioredoxin]-dithiol. The polypeptide is Peptide methionine sulfoxide reductase MsrB (Pseudomonas entomophila (strain L48)).